The following is a 485-amino-acid chain: Glutamyl-tRNA(Gln) amidotransferase subunit A (485 aa).

Catalysis depends on charge relay system residues Lys80 and Ser155. The Acyl-ester intermediate role is filled by Ser179.

Belongs to the amidase family. GatA subfamily. In terms of assembly, heterotrimer of A, B and C subunits.

It catalyses the reaction L-glutamyl-tRNA(Gln) + L-glutamine + ATP + H2O = L-glutaminyl-tRNA(Gln) + L-glutamate + ADP + phosphate + H(+). In terms of biological role, allows the formation of correctly charged Gln-tRNA(Gln) through the transamidation of misacylated Glu-tRNA(Gln) in organisms which lack glutaminyl-tRNA synthetase. The reaction takes place in the presence of glutamine and ATP through an activated gamma-phospho-Glu-tRNA(Gln). In Leptospira borgpetersenii serovar Hardjo-bovis (strain L550), this protein is Glutamyl-tRNA(Gln) amidotransferase subunit A.